The following is a 30-amino-acid chain: Cycloviolacin-O24 (30 aa).

A cross-link (cyclopeptide (Gly-Asn)) is located at residues 1 to 30 (GLPTCGETCFGGTCNTPGCTCDPWPVCTHN). Intrachain disulfides connect Cys-5-Cys-19, Cys-9-Cys-21, and Cys-14-Cys-27.

In terms of processing, this is a cyclic peptide. Expressed in leaves but not in petals, petioles, roots and runners (at protein level).

Its function is as follows. Probably participates in a plant defense mechanism. Has hemolytic activity. The polypeptide is Cycloviolacin-O24 (Viola odorata (Sweet violet)).